A 113-amino-acid polypeptide reads, in one-letter code: U11-theraphotoxin-Hhn1a (113 aa).

Residues 1-21 (MNTVRVTFLLVFVLAVSLGQT) form the signal peptide. A propeptide spanning residues 22 to 74 (DKDENRMEMQEKTEQGKSYLDFAENLLLQKLEELEAKLLEEDSEESRNSRQKR) is cleaved from the precursor. Cystine bridges form between C75–C90, C82–C95, and C89–C110.

The protein belongs to the neurotoxin 14 (magi-1) family. 01 (HNTX-16) subfamily. In terms of tissue distribution, expressed by the venom gland.

It localises to the secreted. Its function is as follows. Probable ion channel inhibitor. This Cyriopagopus hainanus (Chinese bird spider) protein is U11-theraphotoxin-Hhn1a.